The following is a 167-amino-acid chain: Mediator of RNA polymerase II transcription subunit 10 (167 aa).

The tract at residues 54 to 92 (STHTKPHPPPPPPPQPTDPTTAAAPALRDNPDPPLSSIQ) is disordered. The segment covering 60-70 (HPPPPPPPQPT) has biased composition (pro residues).

It belongs to the Mediator complex subunit 10 family. Component of the Mediator complex.

The protein resides in the nucleus. Functionally, component of the Mediator complex, a coactivator involved in the regulated transcription of nearly all RNA polymerase II-dependent genes. Mediator functions as a bridge to convey information from gene-specific regulatory proteins to the basal RNA polymerase II transcription machinery. Mediator is recruited to promoters by direct interactions with regulatory proteins and serves as a scaffold for the assembly of a functional preinitiation complex with RNA polymerase II and the general transcription factors. This chain is Mediator of RNA polymerase II transcription subunit 10 (nut2), found in Aspergillus clavatus (strain ATCC 1007 / CBS 513.65 / DSM 816 / NCTC 3887 / NRRL 1 / QM 1276 / 107).